A 185-amino-acid chain; its full sequence is Deoxyuridine 5'-triphosphate nucleotidohydrolase (185 aa).

Residues 1-23 form a disordered region; that stretch reads MSHLQAHMQRNNKESHSLSPFSQ. Substrate is bound by residues 95–97, asparagine 108, 112–114, and lysine 122; these read RSG and TID. The interval 160-185 is disordered; it reads DQKDSSQTPSNEGSRGADGFGSTGHD. The segment covering 175 to 185 has biased composition (gly residues); it reads GADGFGSTGHD.

Belongs to the dUTPase family. Mg(2+) serves as cofactor.

It carries out the reaction dUTP + H2O = dUMP + diphosphate + H(+). The protein operates within pyrimidine metabolism; dUMP biosynthesis; dUMP from dCTP (dUTP route): step 2/2. Functionally, this enzyme is involved in nucleotide metabolism: it produces dUMP, the immediate precursor of thymidine nucleotides and it decreases the intracellular concentration of dUTP so that uracil cannot be incorporated into DNA. This is Deoxyuridine 5'-triphosphate nucleotidohydrolase from Bartonella quintana (strain Toulouse) (Rochalimaea quintana).